The chain runs to 158 residues: SsrA-binding protein (158 aa).

This sequence belongs to the SmpB family.

The protein localises to the cytoplasm. Required for rescue of stalled ribosomes mediated by trans-translation. Binds to transfer-messenger RNA (tmRNA), required for stable association of tmRNA with ribosomes. tmRNA and SmpB together mimic tRNA shape, replacing the anticodon stem-loop with SmpB. tmRNA is encoded by the ssrA gene; the 2 termini fold to resemble tRNA(Ala) and it encodes a 'tag peptide', a short internal open reading frame. During trans-translation Ala-aminoacylated tmRNA acts like a tRNA, entering the A-site of stalled ribosomes, displacing the stalled mRNA. The ribosome then switches to translate the ORF on the tmRNA; the nascent peptide is terminated with the 'tag peptide' encoded by the tmRNA and targeted for degradation. The ribosome is freed to recommence translation, which seems to be the essential function of trans-translation. This chain is SsrA-binding protein, found in Parafrankia sp. (strain EAN1pec).